The following is a 473-amino-acid chain: GTPase Der (473 aa).

2 EngA-type G domains span residues phenylalanine 3 to arginine 167 and leucine 203 to asparagine 378. GTP-binding positions include glycine 9–serine 16, aspartate 56–leucine 60, asparagine 119–glutamate 122, glycine 209–serine 216, aspartate 256–methionine 260, and asparagine 321–aspartate 324. The KH-like domain maps to lysine 379–aspartate 463.

Belongs to the TRAFAC class TrmE-Era-EngA-EngB-Septin-like GTPase superfamily. EngA (Der) GTPase family. As to quaternary structure, associates with the 50S ribosomal subunit.

In terms of biological role, GTPase that plays an essential role in the late steps of ribosome biogenesis. This is GTPase Der from Rhizobium johnstonii (strain DSM 114642 / LMG 32736 / 3841) (Rhizobium leguminosarum bv. viciae).